Here is a 348-residue protein sequence, read N- to C-terminus: Phosphate acyltransferase (348 aa).

It belongs to the PlsX family. As to quaternary structure, homodimer. Probably interacts with PlsY.

It localises to the cytoplasm. The enzyme catalyses a fatty acyl-[ACP] + phosphate = an acyl phosphate + holo-[ACP]. Its pathway is lipid metabolism; phospholipid metabolism. Functionally, catalyzes the reversible formation of acyl-phosphate (acyl-PO(4)) from acyl-[acyl-carrier-protein] (acyl-ACP). This enzyme utilizes acyl-ACP as fatty acyl donor, but not acyl-CoA. This Rhizorhabdus wittichii (strain DSM 6014 / CCUG 31198 / JCM 15750 / NBRC 105917 / EY 4224 / RW1) (Sphingomonas wittichii) protein is Phosphate acyltransferase.